The sequence spans 217 residues: Protein DJ-1alpha (217 aa).

Catalysis depends on Cys133, which acts as the Nucleophile. A Cysteine sulfinic acid (-SO2H); alternate modification is found at Cys133.

As to expression, expressed in testis (at protein level).

The protein resides in the cytoplasm. Its subcellular location is the nucleus. It localises to the mitochondrion. Its function is as follows. Plays an important role in cell protection against oxidative stress and cell death acting as oxidative stress sensor. Does not play a role in methylglyoxal detoxification. This chain is Protein DJ-1alpha, found in Drosophila melanogaster (Fruit fly).